Here is a 312-residue protein sequence, read N- to C-terminus: tRNA uridine(34) hydroxylase (312 aa).

A Rhodanese domain is found at 130–225; it reads RGDEVVFFDG…YGEQFGNKGL (96 aa). Cys-185 (cysteine persulfide intermediate) is an active-site residue.

Belongs to the TrhO family.

The enzyme catalyses uridine(34) in tRNA + AH2 + O2 = 5-hydroxyuridine(34) in tRNA + A + H2O. Catalyzes oxygen-dependent 5-hydroxyuridine (ho5U) modification at position 34 in tRNAs. The sequence is that of tRNA uridine(34) hydroxylase from Corynebacterium glutamicum (strain ATCC 13032 / DSM 20300 / JCM 1318 / BCRC 11384 / CCUG 27702 / LMG 3730 / NBRC 12168 / NCIMB 10025 / NRRL B-2784 / 534).